A 280-amino-acid chain; its full sequence is DegV domain-containing protein TTE1491 (280 aa).

The region spanning 4–279 is the DegV domain; sequence IAIVTDSLSD…PDAAGVFFEE (276 aa). Positions 61 and 93 each coordinate hexadecanoate.

In terms of biological role, may bind long-chain fatty acids, such as palmitate, and may play a role in lipid transport or fatty acid metabolism. The sequence is that of DegV domain-containing protein TTE1491 from Caldanaerobacter subterraneus subsp. tengcongensis (strain DSM 15242 / JCM 11007 / NBRC 100824 / MB4) (Thermoanaerobacter tengcongensis).